Consider the following 303-residue polypeptide: UDP-N-acetylenolpyruvoylglucosamine reductase (303 aa).

Residues 27–191 (VGGPAARLYK…ISAKLQLTPG (165 aa)) enclose the FAD-binding PCMH-type domain. Arg-171 is a catalytic residue. The Proton donor role is filled by Ser-220. Glu-291 is a catalytic residue.

It belongs to the MurB family. Requires FAD as cofactor.

The protein localises to the cytoplasm. The enzyme catalyses UDP-N-acetyl-alpha-D-muramate + NADP(+) = UDP-N-acetyl-3-O-(1-carboxyvinyl)-alpha-D-glucosamine + NADPH + H(+). It functions in the pathway cell wall biogenesis; peptidoglycan biosynthesis. Its function is as follows. Cell wall formation. The chain is UDP-N-acetylenolpyruvoylglucosamine reductase from Legionella pneumophila (strain Paris).